Reading from the N-terminus, the 599-residue chain is Beta-myrcene synthase, chloroplastic (599 aa).

The transit peptide at 1-34 directs the protein to the chloroplast; the sequence is MWSTISISMNVAILKKPLNFLHNSNNKASNPRCV. Mg(2+) is bound by residues Asp352, Asp356, Asp496, Thr500, and Glu504. The DDXXD motif signature appears at 352–356; it reads DDVYD.

Belongs to the terpene synthase family. Mg(2+) serves as cofactor. Mn(2+) is required as a cofactor.

It is found in the plastid. Its subcellular location is the chloroplast. The enzyme catalyses (2E)-geranyl diphosphate = beta-myrcene + diphosphate. It participates in secondary metabolite biosynthesis; terpenoid biosynthesis. In terms of biological role, monoterpene synthase that catalyzes the formation of beta-myrcene from geranyl diphosphate. The protein is Beta-myrcene synthase, chloroplastic (MYS) of Ocimum basilicum (Sweet basil).